A 368-amino-acid polypeptide reads, in one-letter code: MATHNIVVFGGDHCGPEVVLEAIKVLKAIETNSPSAGKFNLQNHLLGGASIDKHNDPLTDEALNAAKAADAVLLGAIGGPEWGTSSTVRPEQGLLKLRKELGTYGNLRPCNFASESLVDSSPLKAEVCRGTDFIVVRELTGGIYFGDRTEDDGSGYACDTEPYSRAEIVRIARLAGFLALAKNPPAKVWSLDKANVLATSRLWRKTVTDVISKEFPQLQLEHQLIDSAAMLLVKNPRALNGVVITSNLFGDIISDEASVIPGSIGLLPSASLGGIPDGKGKCNGIYEPIHGSAPDISGKGIVNPVGTILSVAMMLRYSLNLPKEADAVEAAVKAAIDNGTKTKDLGGNATTSDMGNAVVAELEKILKA.

NAD(+) is bound at residue 79–91 (GPEWGTSSTVRPE). Positions 98, 108, 137, and 226 each coordinate substrate. 3 residues coordinate Mg(2+): D226, D251, and D255. Residue 291 to 303 (GSAPDISGKGIVN) participates in NAD(+) binding.

The protein belongs to the isocitrate and isopropylmalate dehydrogenases family. As to quaternary structure, homodimer. Requires Mg(2+) as cofactor. Mn(2+) serves as cofactor.

It is found in the cytoplasm. It carries out the reaction (2R,3S)-3-isopropylmalate + NAD(+) = 4-methyl-2-oxopentanoate + CO2 + NADH. Its pathway is amino-acid biosynthesis; L-leucine biosynthesis; L-leucine from 3-methyl-2-oxobutanoate: step 3/4. Catalyzes the oxidation of 3-carboxy-2-hydroxy-4-methylpentanoate (3-isopropylmalate) to 3-carboxy-4-methyl-2-oxopentanoate. The product decarboxylates to 4-methyl-2 oxopentanoate. This chain is 3-isopropylmalate dehydrogenase (leu-1), found in Neurospora crassa (strain ATCC 24698 / 74-OR23-1A / CBS 708.71 / DSM 1257 / FGSC 987).